A 204-amino-acid chain; its full sequence is Large ribosomal subunit protein eL15 (204 aa).

It belongs to the eukaryotic ribosomal protein eL15 family. As to quaternary structure, component of the large ribosomal subunit.

The protein localises to the cytoplasm. Component of the large ribosomal subunit. The ribosome is a large ribonucleoprotein complex responsible for the synthesis of proteins in the cell. This is Large ribosomal subunit protein eL15 (rpl15) from Anguilla japonica (Japanese eel).